Here is a 329-residue protein sequence, read N- to C-terminus: 3'-5' exonuclease (329 aa).

The segment at 26-88 (EEKPKPKKVV…MADVGTPSPE (63 aa)) is disordered. Basic and acidic residues predominate over residues 46–65 (KNLDTPEIVNKENAEVENPP). Ser-78 and Ser-86 each carry phosphoserine. The 159-residue stretch at 130 to 288 (TEIVPMAFDM…IGQVIYREIE (159 aa)) folds into the 3'-5' exonuclease domain. Mg(2+)-binding residues include Asp-138, Glu-140, and Asp-276.

This sequence belongs to the WRNexo family.

The protein localises to the nucleus. Functionally, has exonuclease activity on both single-stranded and duplex templates bearing overhangs, but not blunt ended duplex DNA, and cleaves in a 3'-5' direction. Essential for the formation of DNA replication focal centers. Has an important role in maintaining genome stability. This Drosophila mojavensis (Fruit fly) protein is 3'-5' exonuclease.